We begin with the raw amino-acid sequence, 359 residues long: MTLESMIACCLSDEVKESKRINAEIEKQLRRDKRDARRELKLLLLGTGESGKSTFIKQMRIIHGAGYSEEDKRGFTKLVYQNIFTAMQAVVRAMDTLKIRYKYEQNKANALLIREVDVEKVTTFEHQYVNAIKTLWSDPGVQECYDRRREFQLSDSAKYYLTDVDRIATVGYLPTQQDVLRVRVPTTGIIEYPFDLENIIFRMVDVGGQRSERRKWIHCFENVTSIMFLVALSEYDQVLVESDNENRMEESKALFRTIITYPWFQHSSVILFLNKKDLLEDKILHSHLVDYFPEFDGPQRDAQAAREFILKMFVDLNPDSDKIIYSHFTCATDTENIRFVFAAVKDTILQLNLKEYNLV.

2 S-palmitoyl cysteine lipidation sites follow: Cys9 and Cys10. Positions 38 to 359 (RELKLLLLGT…QLNLKEYNLV (322 aa)) constitute a G-alpha domain. Residues 41–54 (KLLLLGTGESGKST) are G1 motif. Residues 46–53 (GTGESGKS) and 180–183 (LRVR) each bind GTP. Ser53 provides a ligand contact to Mg(2+). The tract at residues 178-186 (DVLRVRVPT) is G2 motif. Residue Thr186 participates in Mg(2+) binding. The interval 201–210 (FRMVDVGGQR) is G3 motif. A G4 motif region spans residues 270–277 (ILFLNKKD). GTP-binding positions include 274-277 (NKKD) and Ala331. The G5 motif stretch occupies residues 329-334 (TCATDT).

This sequence belongs to the G-alpha family. G(q) subfamily. As to quaternary structure, g proteins are composed of 3 units; alpha, beta and gamma. The alpha chain contains the guanine nucleotide binding site. Interacts with RGS22. Interacts with NTSR1.

The protein localises to the cell membrane. The protein resides in the cytoplasm. It catalyses the reaction GTP + H2O = GDP + phosphate + H(+). Guanine nucleotide-binding proteins (G proteins) function as transducers downstream of G protein-coupled receptors (GPCRs) in numerous signaling cascades. The alpha chain contains the guanine nucleotide binding site and alternates between an active, GTP-bound state and an inactive, GDP-bound state. Signaling by an activated GPCR promotes GDP release and GTP binding. The alpha subunit has a low GTPase activity that converts bound GTP to GDP, thereby terminating the signal. Both GDP release and GTP hydrolysis are modulated by numerous regulatory proteins. Signaling is mediated via phospholipase C-beta-dependent inositol lipid hydrolysis for signal propagation: activates phospholipase C-beta: following GPCR activation, GNA11 activates PLC-beta (PLCB1, PLCB2, PLCB3 or PLCB4), leading to production of diacylglycerol (DAG) and inositol 1,4,5-trisphosphate (IP3). Transduces FFAR4 signaling in response to long-chain fatty acids (LCFAs). Together with GNAQ, required for heart development. In the respiratory epithelium, transmits OXGR1-dependent signals that lead to downstream intracellular Ca(2+) release and mucocilliary clearance of airborne pathogens. This Rattus norvegicus (Rat) protein is Guanine nucleotide-binding protein subunit alpha-11 (Gna11).